The following is a 178-amino-acid chain: Large ribosomal subunit protein uL6 (178 aa).

The protein belongs to the universal ribosomal protein uL6 family. As to quaternary structure, part of the 50S ribosomal subunit.

This protein binds to the 23S rRNA, and is important in its secondary structure. It is located near the subunit interface in the base of the L7/L12 stalk, and near the tRNA binding site of the peptidyltransferase center. The sequence is that of Large ribosomal subunit protein uL6 from Streptococcus agalactiae serotype V (strain ATCC BAA-611 / 2603 V/R).